Consider the following 724-residue polypeptide: Probable metal-nicotianamine transporter YSL8 (724 aa).

Residues 1–58 (MRKGGLTPDRDRQIEEHELQETGISPDIERLKRNINATPYQREEEEEDREEQEESVEG) are disordered. Over residues 8–20 (PDRDRQIEEHELQ) the composition is skewed to basic and acidic residues. Phosphoserine is present on Ser25. Residues 43–56 (EEEEEDREEQEESV) are compositionally biased toward acidic residues. A run of 7 helical transmembrane segments spans residues 72–92 (LTIRAFVVSFALSILFSFIVM), 96–116 (LTTGIIPSLNVSAGLLGFFFV), 144–164 (CVVASSGIAFSGGFGTYLFAM), 184–204 (LGWMIAFLFVVSFLGLFSVVP), 245–265 (VLGKFFSFSFFWGFFQWFFTA), 304–324 (IINISLLLGGILSWGLMWPLI), and 349–369 (VFIAVATILGDGLYNFCKVLI). Residues 386-407 (RSSLAHKEDPPASPASPLTPRI) form a disordered region. The next 8 helical transmembrane spans lie at 423–443 (IPSWFAVGGYVVISAVSTAIL), 455–475 (IIVIYIFAPILAFCNAYGAGL), 478–497 (WSLASTYGKLAIFTIGAWAG), 501–520 (GGLLAGLAACGVMMNIVSTA), 541–561 (FVSQVIGTAMGCLVSPCVFWL), 603–623 (LMLCYVFFGVAILINLIKDCL), 641–661 (FFLGPYFAIDMCVGSFILFVW), and 679–699 (GLICGDGIWTLPSSVLAIAGV).

The protein belongs to the YSL (TC 2.A.67.2) family.

It localises to the membrane. May be involved in the transport of nicotianamine-chelated metals. This chain is Probable metal-nicotianamine transporter YSL8 (YSL8), found in Arabidopsis thaliana (Mouse-ear cress).